Consider the following 164-residue polypeptide: MATFLGNPVTFTGSQLQVGEIAHDFSLITPALEKKSLADFAGKKKVLSIIPSIDTGICSMQTRHFNKTLSDLEDTVVLTVSVDLPFAQGKWCAAEGLDNAIMLSDYYDHSFGKAYGLLINEWHLLARAVLVLDADNKITYVEYLDNINSEPNYDAAIEAVKVLG.

The region spanning 16 to 162 (LQVGEIAHDF…YDAAIEAVKV (147 aa)) is the Thioredoxin domain. The active-site Cysteine sulfenic acid (-SOH) intermediate is Cys58. Cys58 and Cys92 are joined by a disulfide.

The protein belongs to the peroxiredoxin family. Tpx subfamily. Homodimer.

The enzyme catalyses a hydroperoxide + [thioredoxin]-dithiol = an alcohol + [thioredoxin]-disulfide + H2O. Functionally, thiol-specific peroxidase that catalyzes the reduction of hydrogen peroxide and organic hydroperoxides to water and alcohols, respectively. Plays a role in cell protection against oxidative stress by detoxifying peroxides. This Streptococcus parasanguinis protein is Thiol peroxidase.